Reading from the N-terminus, the 137-residue chain is Proline-rich protein 13 (137 aa).

Disordered regions lie at residues 26 to 54 and 94 to 137; these read PPPL…PCRP and VGPG…SDSD. Residues 103–124 show a composition bias toward basic residues; that stretch reads KTRKKMKKAHKKSHKHHKHGKH. Positions 125-137 are enriched in low complexity; the sequence is SSSSSSSSSSDSD.

The protein resides in the nucleus. Functionally, negatively regulates TSP1 expression at the level of transcription. This down-regulation was shown to reduce taxane-induced apoptosis. This Mus musculus (Mouse) protein is Proline-rich protein 13 (Prr13).